A 290-amino-acid chain; its full sequence is 4-hydroxybenzoate octaprenyltransferase (290 aa).

8 helical membrane-spanning segments follow: residues 23 to 43 (IGALLLLWPTLWALWVATPGV), 46 to 66 (LWILAVFVAGVWLMRAAGCVV), 99 to 119 (LFVVLVLISFLLVLTLNTMTI), 141 to 161 (LPQVVLGAAFGWSIPMAFAAV), 163 to 183 (ESVPLSCWLMFLANILWAVAY), 213 to 233 (LIIGILQIGVLALMAIIGELN), 234 to 254 (GLGWGYYWSIVVAGALFVYQQ), and 268 to 288 (AFMNNNYVGLVLFLGLAMSYW).

This sequence belongs to the UbiA prenyltransferase family. It depends on Mg(2+) as a cofactor.

Its subcellular location is the cell inner membrane. The catalysed reaction is all-trans-octaprenyl diphosphate + 4-hydroxybenzoate = 4-hydroxy-3-(all-trans-octaprenyl)benzoate + diphosphate. It functions in the pathway cofactor biosynthesis; ubiquinone biosynthesis. In terms of biological role, catalyzes the prenylation of para-hydroxybenzoate (PHB) with an all-trans polyprenyl group. Mediates the second step in the final reaction sequence of ubiquinone-8 (UQ-8) biosynthesis, which is the condensation of the polyisoprenoid side chain with PHB, generating the first membrane-bound Q intermediate 3-octaprenyl-4-hydroxybenzoate. In Escherichia coli (strain SE11), this protein is 4-hydroxybenzoate octaprenyltransferase.